The chain runs to 98 residues: Prostate and testis expressed protein 3 (98 aa).

The signal sequence occupies residues 1–20; it reads MNKHFLLLFSLFYFIVEATS. The 77-residue stretch at 21 to 97 folds into the UPAR/Ly6 domain; the sequence is LKCVTCHLRT…CCNSDFCNFR (77 aa). 4 disulfide bridges follow: C23–C50, C26–C35, C42–C68, and C72–C88.

Belongs to the PATE family.

Its subcellular location is the secreted. The protein is Prostate and testis expressed protein 3 (Pate3) of Mus musculus (Mouse).